The following is a 435-amino-acid chain: Serine--tRNA ligase (435 aa).

238–240 (TAE) contacts L-serine. ATP is bound at residue 269–271 (RAE). Residue E292 participates in L-serine binding. 356 to 359 (EISS) contacts ATP. S392 provides a ligand contact to L-serine.

The protein belongs to the class-II aminoacyl-tRNA synthetase family. Type-1 seryl-tRNA synthetase subfamily. In terms of assembly, homodimer. The tRNA molecule binds across the dimer.

Its subcellular location is the cytoplasm. It carries out the reaction tRNA(Ser) + L-serine + ATP = L-seryl-tRNA(Ser) + AMP + diphosphate + H(+). The enzyme catalyses tRNA(Sec) + L-serine + ATP = L-seryl-tRNA(Sec) + AMP + diphosphate + H(+). It functions in the pathway aminoacyl-tRNA biosynthesis; selenocysteinyl-tRNA(Sec) biosynthesis; L-seryl-tRNA(Sec) from L-serine and tRNA(Sec): step 1/1. Functionally, catalyzes the attachment of serine to tRNA(Ser). Is also able to aminoacylate tRNA(Sec) with serine, to form the misacylated tRNA L-seryl-tRNA(Sec), which will be further converted into selenocysteinyl-tRNA(Sec). This Methylobacterium sp. (strain 4-46) protein is Serine--tRNA ligase.